The chain runs to 359 residues: Alanine racemase, biosynthetic (359 aa).

Lys34 (proton acceptor; specific for D-alanine) is an active-site residue. Position 34 is an N6-(pyridoxal phosphate)lysine (Lys34). Residue Arg129 participates in substrate binding. Residue Tyr255 is the Proton acceptor; specific for L-alanine of the active site. Position 303 (Met303) interacts with substrate.

The protein belongs to the alanine racemase family. Monomer but homodimer in the presence of the substrate. The cofactor is pyridoxal 5'-phosphate.

The enzyme catalyses L-alanine = D-alanine. It participates in amino-acid biosynthesis; D-alanine biosynthesis; D-alanine from L-alanine: step 1/1. Its pathway is cell wall biogenesis; peptidoglycan biosynthesis. Functionally, catalyzes the interconversion of L-alanine and D-alanine. This chain is Alanine racemase, biosynthetic (alr), found in Shigella sonnei.